The chain runs to 876 residues: Leucine--tRNA ligase (876 aa).

Positions proline 42–histidine 52 match the 'HIGH' region motif. The 'KMSKS' region signature appears at lysine 634 to serine 638. Residue lysine 637 participates in ATP binding.

Belongs to the class-I aminoacyl-tRNA synthetase family.

The protein localises to the cytoplasm. It catalyses the reaction tRNA(Leu) + L-leucine + ATP = L-leucyl-tRNA(Leu) + AMP + diphosphate. The sequence is that of Leucine--tRNA ligase from Neisseria gonorrhoeae (strain NCCP11945).